An 89-amino-acid chain; its full sequence is U-scoloptoxin(12)-Er1a (89 aa).

The first 22 residues, 1 to 22 (MKGLFLVVFLMWFVSQMNTEET), serve as a signal peptide directing secretion.

This sequence belongs to the scoloptoxin-12 family. Contains 3 disulfide bonds. As to expression, expressed by the venom gland.

The protein resides in the secreted. This chain is U-scoloptoxin(12)-Er1a, found in Ethmostigmus rubripes (Giant centipede).